The sequence spans 630 residues: Biosynthetic arginine decarboxylase (630 aa).

Position 99 is an N6-(pyridoxal phosphate)lysine (Lys99). Residue Val281–Tyr291 participates in substrate binding.

This sequence belongs to the Orn/Lys/Arg decarboxylase class-II family. SpeA subfamily. Mg(2+) is required as a cofactor. Requires pyridoxal 5'-phosphate as cofactor.

It carries out the reaction L-arginine + H(+) = agmatine + CO2. It functions in the pathway amine and polyamine biosynthesis; agmatine biosynthesis; agmatine from L-arginine: step 1/1. In terms of biological role, catalyzes the biosynthesis of agmatine from arginine. The protein is Biosynthetic arginine decarboxylase of Phocaeicola vulgatus (strain ATCC 8482 / DSM 1447 / JCM 5826 / CCUG 4940 / NBRC 14291 / NCTC 11154) (Bacteroides vulgatus).